Reading from the N-terminus, the 179-residue chain is Cytochrome b6-f complex iron-sulfur subunit (179 aa).

A helical transmembrane segment spans residues Leu-21–Ile-43. The 102-residue stretch at Gly-61–Leu-162 folds into the Rieske domain. [2Fe-2S] cluster is bound by residues Cys-108, His-110, Cys-126, and His-129. A disulfide bridge links Cys-113 with Cys-128.

Belongs to the Rieske iron-sulfur protein family. The 4 large subunits of the cytochrome b6-f complex are cytochrome b6, subunit IV (17 kDa polypeptide, PetD), cytochrome f and the Rieske protein, while the 4 small subunits are PetG, PetL, PetM and PetN. The complex functions as a dimer. [2Fe-2S] cluster serves as cofactor.

The protein resides in the cellular thylakoid membrane. The enzyme catalyses 2 oxidized [plastocyanin] + a plastoquinol + 2 H(+)(in) = 2 reduced [plastocyanin] + a plastoquinone + 4 H(+)(out). In terms of biological role, component of the cytochrome b6-f complex, which mediates electron transfer between photosystem II (PSII) and photosystem I (PSI), cyclic electron flow around PSI, and state transitions. The protein is Cytochrome b6-f complex iron-sulfur subunit of Nostoc punctiforme (strain ATCC 29133 / PCC 73102).